The sequence spans 483 residues: MKATKETLSPTRVKLTVEVPFDELKPSLEATYRKLARQVRVSGFRPGKVPPRILDQRLGRGVILDEAVQEALPQLYSEAVQAEEVDVLSRPEVDITEFADGGQLVFTAEVDVRPEVTLPEFSELEITVDAVEVTDEQVEEQLGALRDRFAVLTPVERAVQAGDYVSLDLSAEADGTPIDGAEATGLSYEVGSGNLVEGLDDAIIGATDGETRTFTTELLSGEQAGQPAQVTATVRGVKEKELPALDDDFATTASEFDTLDELRADIRTRLEQSRRTEQVGQAREKLLESLLERVEVPVPGSLLAGEIEAREHRLSRELEYIGTDRPSYLETLGQTEEEFDAEVRESAGKAIRSQFILDAVIDAESIGIDQGELMEQLILRAQRSGVQPDVYAQQLAQGEGLTALMADVLRTKALFLLLENAKVVDGAGTPVELALPARSQPDTDADADHDRDVTVAAEAVAPGDGDATVEPVEPVEAETDGNG.

A PPIase FKBP-type domain is found at Gly-162–Pro-243. A disordered region spans residues Ala-459–Gly-483. The span at Glu-473 to Gly-483 shows a compositional bias: acidic residues.

The protein belongs to the FKBP-type PPIase family. Tig subfamily.

It is found in the cytoplasm. It carries out the reaction [protein]-peptidylproline (omega=180) = [protein]-peptidylproline (omega=0). In terms of biological role, involved in protein export. Acts as a chaperone by maintaining the newly synthesized protein in an open conformation. Functions as a peptidyl-prolyl cis-trans isomerase. This chain is Trigger factor, found in Frankia casuarinae (strain DSM 45818 / CECT 9043 / HFP020203 / CcI3).